Reading from the N-terminus, the 83-residue chain is Transmembrane protein EP84R (83 aa).

The next 2 membrane-spanning stretches (helical) occupy residues 31-51 (IIGV…IIIL) and 59-79 (AGSI…FLIY).

Belongs to the asfivirus EP84R family.

The protein localises to the virion membrane. This Ornithodoros (relapsing fever ticks) protein is Transmembrane protein EP84R.